A 143-amino-acid chain; its full sequence is Probable FAD-linked sulfhydryl oxidase R368 (143 aa).

One can recognise an ERV/ALR sulfhydryl oxidase domain in the interval 10–104; it reads GWTFSHAVAL…YPEAIEAIEK (95 aa). A disulfide bridge links cysteine 46 with cysteine 49. The helical transmembrane segment at 117–137 threads the bilayer; sequence FFIILIIIGIIVIIYLMYIVF.

FAD is required as a cofactor.

Its subcellular location is the membrane. It carries out the reaction 2 R'C(R)SH + O2 = R'C(R)S-S(R)CR' + H2O2. Its function is as follows. FAD-dependent sulfhydryl oxidase that catalyzes disulfide bond formation. This is Probable FAD-linked sulfhydryl oxidase R368 from Acanthamoeba polyphaga mimivirus (APMV).